A 728-amino-acid polypeptide reads, in one-letter code: Polyribonucleotide nucleotidyltransferase (728 aa).

Residues Asp513 and Asp519 each contribute to the Mg(2+) site. The KH domain maps to 580-640 (PKVKMILIKP…EIVDLTVTYI (61 aa)). The S1 motif domain occupies 650 to 724 (ENVYEVKILR…ERGQIDLSKK (75 aa)).

It belongs to the polyribonucleotide nucleotidyltransferase family. Mg(2+) serves as cofactor.

The protein localises to the cytoplasm. It carries out the reaction RNA(n+1) + phosphate = RNA(n) + a ribonucleoside 5'-diphosphate. In terms of biological role, involved in mRNA degradation. Catalyzes the phosphorolysis of single-stranded polyribonucleotides processively in the 3'- to 5'-direction. The sequence is that of Polyribonucleotide nucleotidyltransferase from Phytoplasma mali (strain AT).